The chain runs to 447 residues: Tektin-4 (447 aa).

Coiled coils occupy residues 322 to 348 and 375 to 423; these read LRKTLTEITDQEHQIAALKQAIKDKEA and FRLL…TNSL.

It belongs to the tektin family. Microtubule inner protein component of sperm flagellar doublet microtubules. Post-translationally, ubiquitinated, leading to its degradation. Deubiquitinated by USP16, promoting its stability. As to expression, detected in testis, where it is weakly expressed in round spermatids, and strongly expressed in the flagellum of step 16 elongated spermatids (at protein level). Expressed in spermatozoa. In the sperm flagellum, localizes to the principal piece and midpiece (at protein level). Specifically expressed in testis; not detected in other tissues tested.

Its subcellular location is the cytoplasm. The protein localises to the cytoskeleton. The protein resides in the cilium axoneme. It localises to the flagellum axoneme. Functionally, microtubule inner protein (MIP) part of the dynein-decorated doublet microtubules (DMTs) in cilia and flagellar axoneme. Forms filamentous polymers in the walls of ciliary and flagellar microtubules. Contributes to normal sperm motility. This is Tektin-4 (Tekt4) from Mus musculus (Mouse).